Reading from the N-terminus, the 258-residue chain is Adenylate kinase (258 aa).

52–57 (GAGKGT) contacts ATP. Positions 72-101 (ATGDMLRSQVAKKTELGKEAKKIMDQGGLV) are NMP. AMP-binding positions include Thr73, Arg78, 99-101 (GLV), 128-131 (GFPR), and Gln135. Residues 169–206 (GRLVHPASGRSYHKVFNPPKQEMKDDITGEPLIQRSDD) form an LID region. ATP-binding positions include Arg170 and 179-180 (SY). Residues Arg203 and Arg214 each contribute to the AMP site. An ATP-binding site is contributed by Gln242.

The protein belongs to the adenylate kinase family. AK2 subfamily. As to quaternary structure, monomer.

It localises to the cytoplasm. The protein resides in the cytosol. It is found in the mitochondrion intermembrane space. The enzyme catalyses AMP + ATP = 2 ADP. Functionally, catalyzes the reversible transfer of the terminal phosphate group between ATP and AMP. Plays an important role in cellular energy homeostasis and in adenine nucleotide metabolism. Adenylate kinase activity is critical for regulation of the phosphate utilization and the AMP de novo biosynthesis pathways. The sequence is that of Adenylate kinase (adk1) from Aspergillus oryzae (strain ATCC 42149 / RIB 40) (Yellow koji mold).